Consider the following 531-residue polypeptide: Muscarinic acetylcholine receptor M5 (531 aa).

Residues 1-28 lie on the Extracellular side of the membrane; it reads MEGESYNESTVNGTPVNHQALERHGLWE. The N-linked (GlcNAc...) asparagine glycan is linked to N7. A helical transmembrane segment spans residues 29–52; that stretch reads VITIAVVTAVVSLMTIVGNVLVMI. Over 53-65 the chain is Cytoplasmic; sequence SFKVNSQLKTVNN. The helical transmembrane segment at 66-86 threads the bilayer; the sequence is YYLLSLACADLIIGIFSMNLY. At 87–103 the chain is on the extracellular side; it reads TTYILMGRWVLGSLACD. A disulfide bond links C102 and C182. Residues 104–125 form a helical membrane-spanning segment; the sequence is LWLALDYVASNASVMNLLVISF. Over 126–145 the chain is Cytoplasmic; it reads DRYFSITRPLTYRAKRTPKR. The helical transmembrane segment at 146 to 168 threads the bilayer; it reads AGIMIGLAWLVSFILWAPAILCW. Topologically, residues 169 to 190 are extracellular; it reads QYLVGKRTVPPDECQIQFLSEP. A helical transmembrane segment spans residues 191 to 213; that stretch reads TITFGTAIAAFYIPVSVMTILYC. The Cytoplasmic segment spans residues 214-442; the sequence is RIYRETEKRT…LVKERKAAQT (229 aa). 2 disordered regions span residues 259-295 and 327-346; these read SLAQ…DWEK and EAKE…ETVV. Over residues 267–287 the composition is skewed to low complexity; sequence QASWSSSRRSTSTTGKTTQAT. The span at 334-346 shows a compositional bias: polar residues; it reads KESNTQETKETVV. The chain crosses the membrane as a helical span at residues 443 to 463; the sequence is LSAILLAFIITWTPYNIMVLV. Residues 464–477 lie on the Extracellular side of the membrane; the sequence is STFCDKCVPVTLWH. A helical transmembrane segment spans residues 478 to 497; it reads LGYWLCYVNSTINPICYALC. Over 498 to 531 the chain is Cytoplasmic; sequence NRTFRKTFKLLLLCRWKKKKVEEKLYWQGNSKLP. A phosphothreonine mark is found at T500 and T504.

Belongs to the G-protein coupled receptor 1 family. Muscarinic acetylcholine receptor subfamily. CHRM5 sub-subfamily.

The protein localises to the cell membrane. The protein resides in the postsynaptic cell membrane. Functionally, the muscarinic acetylcholine receptor mediates various cellular responses, including inhibition of adenylate cyclase, breakdown of phosphoinositides and modulation of potassium channels through the action of G proteins. Primary transducing effect is Pi turnover. The polypeptide is Muscarinic acetylcholine receptor M5 (Chrm5) (Rattus norvegicus (Rat)).